We begin with the raw amino-acid sequence, 366 residues long: Anhydro-N-acetylmuramic acid kinase (366 aa).

15–22 is an ATP binding site; it reads GTSLDGVD.

It belongs to the anhydro-N-acetylmuramic acid kinase family.

The enzyme catalyses 1,6-anhydro-N-acetyl-beta-muramate + ATP + H2O = N-acetyl-D-muramate 6-phosphate + ADP + H(+). It participates in amino-sugar metabolism; 1,6-anhydro-N-acetylmuramate degradation. It functions in the pathway cell wall biogenesis; peptidoglycan recycling. Catalyzes the specific phosphorylation of 1,6-anhydro-N-acetylmuramic acid (anhMurNAc) with the simultaneous cleavage of the 1,6-anhydro ring, generating MurNAc-6-P. Is required for the utilization of anhMurNAc either imported from the medium or derived from its own cell wall murein, and thus plays a role in cell wall recycling. The polypeptide is Anhydro-N-acetylmuramic acid kinase (Hydrogenovibrio crunogenus (strain DSM 25203 / XCL-2) (Thiomicrospira crunogena)).